Reading from the N-terminus, the 24-residue chain is FLPAVLRVAAKIVPTVFCAISKKC.

A disulfide bridge connects residues C18 and C24.

Expressed by the skin glands.

The protein resides in the secreted. Functionally, has antibacterial activity against the Gram-positive bacterium S.aureus ATCC 25923 (MIC=3 uM) and the Gram-negative bacterium E.coli ATCC 25726 (MIC=24 uM). This chain is Brevinin-1HSa, found in Odorrana hosii (Hose's rock frog).